A 261-amino-acid polypeptide reads, in one-letter code: MLIIFKDLNLVKTNNCQIIGWWKQLSLPQKTFLSFIPLFLVTSAFVLTGIVESLLTFGTIIEQIDKFTDQTNVMLLIYAVIYTFNPKSWLLKNQQFFLSALAYILFTFIGYNLILSIAGIAYKSTNPYKLTSSIFLHVIAPIAFFIASFIKIKHEKDVNINMFFKSLLLFMIYPLIYGLYLVTIPYVRHYLFNGRPSTYTIYGSITNTKNNPFAWLVVFAVLFIYFPLSYLAIYLLQLKLIKKAIQPQFNLPFTLNKWKQK.

The next 6 membrane-spanning stretches (helical) occupy residues 31-51 (TFLSFIPLFLVTSAFVLTGIV), 71-91 (TNVMLLIYAVIYTFNPKSWLL), 101-121 (LAYILFTFIGYNLILSIAGIA), 130-150 (LTSSIFLHVIAPIAFFIASFI), 167-187 (LLLFMIYPLIYGLYLVTIPYV), and 213-233 (FAWLVVFAVLFIYFPLSYLAI).

The protein localises to the cell membrane. This is an uncharacterized protein from Mycoplasma genitalium (strain ATCC 33530 / DSM 19775 / NCTC 10195 / G37) (Mycoplasmoides genitalium).